A 760-amino-acid chain; its full sequence is Formate acetyltransferase 1 (760 aa).

One can recognise a PFL domain in the interval 3–625 (ELNEKLATAW…KTGNTPDGRR (623 aa)). Residue K63 is modified to N6-acetyllysine; alternate. K63 is modified (N6-succinyllysine; alternate). K107 is subject to N6-succinyllysine. K117 is subject to N6-acetyllysine; alternate. K117 bears the N6-succinyllysine; alternate mark. K124 carries the N6-succinyllysine modification. Position 195 is an N6-acetyllysine; alternate (K195). Position 195 is an N6-succinyllysine; alternate (K195). Residue C419 is the S-acetylcysteine intermediate of the active site. The Cysteine radical intermediate role is filled by C420. Residue K454 is modified to N6-acetyllysine; alternate. N6-succinyllysine; alternate is present on K454. The residue at position 467 (K467) is an N6-succinyllysine. 2 positions are modified to N6-acetyllysine: K541 and K591. Residues 632–760 (PGANPMHGRD…VITRTFTQSM (129 aa)) form the Glycine radical domain. An N6-succinyllysine modification is found at K654. G735 bears the Glycine radical mark.

This sequence belongs to the glycyl radical enzyme (GRE) family. PFL subfamily. In terms of assembly, homodimer. Interacts specifically with FocA.

It localises to the cytoplasm. The catalysed reaction is formate + acetyl-CoA = pyruvate + CoA. The protein operates within fermentation; pyruvate fermentation; formate from pyruvate: step 1/1. In terms of biological role, catalyzes the conversion of pyruvate to formate and acetyl-CoA. In addition, may be involved in the control of the activity of the formate channel FocA, via direct interaction with FocA. The sequence is that of Formate acetyltransferase 1 (pflB) from Escherichia coli (strain K12).